The following is a 286-amino-acid chain: ATP synthase gamma chain (286 aa).

This sequence belongs to the ATPase gamma chain family. F-type ATPases have 2 components, CF(1) - the catalytic core - and CF(0) - the membrane proton channel. CF(1) has five subunits: alpha(3), beta(3), gamma(1), delta(1), epsilon(1). CF(0) has three main subunits: a, b and c.

The protein resides in the cell inner membrane. Functionally, produces ATP from ADP in the presence of a proton gradient across the membrane. The gamma chain is believed to be important in regulating ATPase activity and the flow of protons through the CF(0) complex. The sequence is that of ATP synthase gamma chain from Shewanella sediminis (strain HAW-EB3).